A 286-amino-acid polypeptide reads, in one-letter code: NAD kinase (286 aa).

Asp74 serves as the catalytic Proton acceptor. NAD(+)-binding positions include 74-75, 148-149, Asp178, Ala186, 189-194, and Gln244; these read DG, ND, and TAYNLS.

It belongs to the NAD kinase family. The cofactor is a divalent metal cation.

It is found in the cytoplasm. The catalysed reaction is NAD(+) + ATP = ADP + NADP(+) + H(+). Functionally, involved in the regulation of the intracellular balance of NAD and NADP, and is a key enzyme in the biosynthesis of NADP. Catalyzes specifically the phosphorylation on 2'-hydroxyl of the adenosine moiety of NAD to yield NADP. The polypeptide is NAD kinase (Campylobacter jejuni (strain RM1221)).